The primary structure comprises 429 residues: Transcriptional coactivator AacuS (429 aa).

The HTH iclR-type domain occupies 80–144 (MASQTQLLAC…GFLQEPELGH (65 aa)). The H-T-H motif DNA-binding region spans 110 to 129 (IKDVAELIGVPENHICRIVR).

The protein localises to the nucleus. Functionally, transcriptional coactivator; part of the gene cluster that mediates the biosynthesis of the tetrahydroxanthone dimer secalonic acid D. This is Transcriptional coactivator AacuS from Aspergillus aculeatus (strain ATCC 16872 / CBS 172.66 / WB 5094).